The following is a 601-amino-acid chain: Proteasome-associated ATPase (601 aa).

The span at 1–15 shows a compositional bias: gly residues; sequence MSGPRSGSGSGGSTG. A disordered region spans residues 1–31; sequence MSGPRSGSGSGGSTGRPGDAESRRSAYEKEA. Residues 18–31 show a composition bias toward basic and acidic residues; sequence GDAESRRSAYEKEA. The stretch at 18–106 forms a coiled coil; that stretch reads GDAESRRSAY…LKEEVDRLAQ (89 aa). 289 to 294 contacts ATP; sequence GCGKTL. The segment at 600-601 is docks into pockets in the proteasome alpha-ring; the sequence is YL.

Belongs to the AAA ATPase family. In terms of assembly, homohexamer. Assembles into a hexameric ring structure that caps the 20S proteasome core. Strongly interacts with the prokaryotic ubiquitin-like protein Pup through a hydrophobic interface; the interacting region of ARC lies in its N-terminal coiled-coil domain. There is one Pup binding site per ARC hexamer ring. Upon ATP-binding, the C-terminus of ARC interacts with the alpha-rings of the proteasome core, possibly by binding to the intersubunit pockets.

The protein operates within protein degradation; proteasomal Pup-dependent pathway. In terms of biological role, ATPase which is responsible for recognizing, binding, unfolding and translocation of pupylated proteins into the bacterial 20S proteasome core particle. May be essential for opening the gate of the 20S proteasome via an interaction with its C-terminus, thereby allowing substrate entry and access to the site of proteolysis. Thus, the C-termini of the proteasomal ATPase may function like a 'key in a lock' to induce gate opening and therefore regulate proteolysis. This is Proteasome-associated ATPase from Frankia alni (strain DSM 45986 / CECT 9034 / ACN14a).